A 296-amino-acid chain; its full sequence is tRNA dimethylallyltransferase (296 aa).

Residue 2 to 9 participates in ATP binding; that stretch reads GPTASGKT. A substrate-binding site is contributed by 4–9; that stretch reads TASGKT. 3 interaction with substrate tRNA regions span residues 27–30, 151–155, and 232–237; these read DSAL, QRLAR, and RCVGYR.

Belongs to the IPP transferase family. Monomer. The cofactor is Mg(2+).

It carries out the reaction adenosine(37) in tRNA + dimethylallyl diphosphate = N(6)-dimethylallyladenosine(37) in tRNA + diphosphate. In terms of biological role, catalyzes the transfer of a dimethylallyl group onto the adenine at position 37 in tRNAs that read codons beginning with uridine, leading to the formation of N6-(dimethylallyl)adenosine (i(6)A). In Shewanella pealeana (strain ATCC 700345 / ANG-SQ1), this protein is tRNA dimethylallyltransferase.